The primary structure comprises 152 residues: SUZ RNA-binding domain-containing (152 aa).

The residue at position 1 (Met-1) is an N-acetylmethionine. Residues 30–152 (TQKESRKSKS…DGSQGFKQRR (123 aa)) are disordered. Ser-37, Ser-39, and Ser-51 each carry phosphoserine. The SUZ domain occupies 42-107 (KVPIVIQDDS…ARKRILGSAS (66 aa)). Polar residues predominate over residues 66–81 (PTSNGVVSSPNSTSRP). The segment covering 89–100 (AQREAEYAEARK) has biased composition (basic and acidic residues). A phosphoserine mark is found at Ser-105 and Ser-107. The region spanning 111–152 (EQEKPILDRPTRISQPEDSRQPNNVIRQPLGPDGSQGFKQRR) is the SUZ-C domain. Basic and acidic residues predominate over residues 113–130 (EKPILDRPTRISQPEDSR).

Belongs to the SZRD1 family.

The protein is SUZ RNA-binding domain-containing (SZRD1) of Homo sapiens (Human).